Reading from the N-terminus, the 499-residue chain is Probable cytosol aminopeptidase (499 aa).

Mn(2+) is bound by residues Lys271 and Asp276. Lys283 is a catalytic residue. Mn(2+) contacts are provided by Asp294, Asp353, and Glu355. Residue Arg357 is part of the active site.

The protein belongs to the peptidase M17 family. It depends on Mn(2+) as a cofactor.

The protein resides in the cytoplasm. It carries out the reaction Release of an N-terminal amino acid, Xaa-|-Yaa-, in which Xaa is preferably Leu, but may be other amino acids including Pro although not Arg or Lys, and Yaa may be Pro. Amino acid amides and methyl esters are also readily hydrolyzed, but rates on arylamides are exceedingly low.. The catalysed reaction is Release of an N-terminal amino acid, preferentially leucine, but not glutamic or aspartic acids.. Its function is as follows. Presumably involved in the processing and regular turnover of intracellular proteins. Catalyzes the removal of unsubstituted N-terminal amino acids from various peptides. In Bordetella parapertussis (strain 12822 / ATCC BAA-587 / NCTC 13253), this protein is Probable cytosol aminopeptidase.